Consider the following 485-residue polypeptide: Cobyric acid synthase (485 aa).

A GATase cobBQ-type domain is found at 250 to 436; that stretch reads RRIVACPILP…IHGLLASPAL (187 aa). Catalysis depends on Cys332, which acts as the Nucleophile. The active site involves His428.

The protein belongs to the CobB/CobQ family. CobQ subfamily.

The protein operates within cofactor biosynthesis; adenosylcobalamin biosynthesis. Its function is as follows. Catalyzes amidations at positions B, D, E, and G on adenosylcobyrinic A,C-diamide. NH(2) groups are provided by glutamine, and one molecule of ATP is hydrogenolyzed for each amidation. This is Cobyric acid synthase from Sphingopyxis alaskensis (strain DSM 13593 / LMG 18877 / RB2256) (Sphingomonas alaskensis).